A 282-amino-acid polypeptide reads, in one-letter code: Formamidopyrimidine-DNA glycosylase (282 aa).

P2 functions as the Schiff-base intermediate with DNA in the catalytic mechanism. E3 serves as the catalytic Proton donor. Catalysis depends on K61, which acts as the Proton donor; for beta-elimination activity. DNA-binding residues include H93, R112, and K158. The FPG-type zinc finger occupies 244–278 (DAYGREGEGCRRCGAVMHREKFMNRSSFYCPRCQP). R268 functions as the Proton donor; for delta-elimination activity in the catalytic mechanism.

This sequence belongs to the FPG family. Monomer. The cofactor is Zn(2+).

The catalysed reaction is Hydrolysis of DNA containing ring-opened 7-methylguanine residues, releasing 2,6-diamino-4-hydroxy-5-(N-methyl)formamidopyrimidine.. The enzyme catalyses 2'-deoxyribonucleotide-(2'-deoxyribose 5'-phosphate)-2'-deoxyribonucleotide-DNA = a 3'-end 2'-deoxyribonucleotide-(2,3-dehydro-2,3-deoxyribose 5'-phosphate)-DNA + a 5'-end 5'-phospho-2'-deoxyribonucleoside-DNA + H(+). Functionally, involved in base excision repair of DNA damaged by oxidation or by mutagenic agents. Acts as a DNA glycosylase that recognizes and removes damaged bases. Has a preference for oxidized purines, such as 7,8-dihydro-8-oxoguanine (8-oxoG). Has AP (apurinic/apyrimidinic) lyase activity and introduces nicks in the DNA strand. Cleaves the DNA backbone by beta-delta elimination to generate a single-strand break at the site of the removed base with both 3'- and 5'-phosphates. The chain is Formamidopyrimidine-DNA glycosylase from Mycobacterium leprae (strain Br4923).